The sequence spans 566 residues: Arginine--tRNA ligase (566 aa).

Positions 124–134 (ANPNGPLHIGH) match the 'HIGH' region motif.

It belongs to the class-I aminoacyl-tRNA synthetase family.

The protein localises to the cytoplasm. The enzyme catalyses tRNA(Arg) + L-arginine + ATP = L-arginyl-tRNA(Arg) + AMP + diphosphate. In Methanocaldococcus jannaschii (strain ATCC 43067 / DSM 2661 / JAL-1 / JCM 10045 / NBRC 100440) (Methanococcus jannaschii), this protein is Arginine--tRNA ligase (argS).